Reading from the N-terminus, the 149-residue chain is Protegrin-5 (149 aa).

The signal sequence occupies residues 1 to 29 (METQRASLCLGRWSLWLLLLGLVVPSASA). Residues 30 to 130 (QALSYREAVL…DITCNEVQGV (101 aa)) constitute a propeptide that is removed on maturation. Positions 61-80 (DQPPKADEDPGTPKPVSFTV) are disordered. Cystine bridges form between Cys85–Cys96, Cys107–Cys124, Cys136–Cys145, and Cys138–Cys143. Residue Arg148 is modified to Arginine amide.

It belongs to the cathelicidin family.

The protein resides in the secreted. Functionally, microbicidal activity. This Sus scrofa (Pig) protein is Protegrin-5 (NPG5).